Reading from the N-terminus, the 251-residue chain is NADPH-dependent oxidoreductase (251 aa).

This sequence belongs to the flavin oxidoreductase frp family. FMN serves as cofactor.

In terms of biological role, reduces FMN, organic nitro compounds and disulfide DTNB. Involved in maintenance of the cellular redox state and the disulfide stress response. In Staphylococcus saprophyticus subsp. saprophyticus (strain ATCC 15305 / DSM 20229 / NCIMB 8711 / NCTC 7292 / S-41), this protein is NADPH-dependent oxidoreductase (nfrA).